Consider the following 215-residue polypeptide: FMN-dependent NADH:quinone oxidoreductase (215 aa).

Residue 17 to 19 (SAS) participates in FMN binding.

The protein belongs to the azoreductase type 1 family. Homodimer. The cofactor is FMN.

It catalyses the reaction 2 a quinone + NADH + H(+) = 2 a 1,4-benzosemiquinone + NAD(+). The enzyme catalyses N,N-dimethyl-1,4-phenylenediamine + anthranilate + 2 NAD(+) = 2-(4-dimethylaminophenyl)diazenylbenzoate + 2 NADH + 2 H(+). Functionally, quinone reductase that provides resistance to thiol-specific stress caused by electrophilic quinones. In terms of biological role, also exhibits azoreductase activity. Catalyzes the reductive cleavage of the azo bond in aromatic azo compounds to the corresponding amines. This Clostridium botulinum (strain Eklund 17B / Type B) protein is FMN-dependent NADH:quinone oxidoreductase.